Here is an 87-residue protein sequence, read N- to C-terminus: LYR motif-containing protein 2 (87 aa).

Residues 1–19 constitute a mitochondrion transit peptide; that stretch reads MGSRLPPAALTLKQFLVRQ.

This sequence belongs to the complex I LYR family.

It localises to the mitochondrion. Functionally, involved in efficient integration of the N-module into mitochondrial respiratory chain complex I. This Xenopus tropicalis (Western clawed frog) protein is LYR motif-containing protein 2 (lyrm2).